The sequence spans 168 residues: TTVPKMLINLQKQNKAISYAGCITQLSFVLLFAGMENFLLAAMAYDRYVAICKPLRYTAIMKAHLCLVMTLLSLCISIVDALLHGLMILRLSFCTFLEIPHYFCELYQVIKLSCSDTLINNILVYTMTSTLGGVPLGGIIFSYFKIISSILRMPSSGSRHRAFSTCGS.

The Extracellular portion of the chain corresponds to 1 to 25 (TTVPKMLINLQKQNKAISYAGCITQ). Residues Cys22 and Cys104 are joined by a disulfide bond. The helical transmembrane segment at 26-45 (LSFVLLFAGMENFLLAAMAY) threads the bilayer. Residues 46 to 67 (DRYVAICKPLRYTAIMKAHLCL) lie on the Cytoplasmic side of the membrane. A helical membrane pass occupies residues 68-88 (VMTLLSLCISIVDALLHGLMI). At 89–121 (LRLSFCTFLEIPHYFCELYQVIKLSCSDTLINN) the chain is on the extracellular side. A helical transmembrane segment spans residues 122 to 143 (ILVYTMTSTLGGVPLGGIIFSY). The Cytoplasmic portion of the chain corresponds to 144–165 (FKIISSILRMPSSGSRHRAFST). A helical transmembrane segment spans residues 166–168 (CGS).

Belongs to the G-protein coupled receptor 1 family. In terms of tissue distribution, tongue specific.

Its subcellular location is the cell membrane. Its function is as follows. Possible taste receptor. This chain is Putative gustatory receptor clone PTE03 (Olr1145), found in Rattus norvegicus (Rat).